A 229-amino-acid chain; its full sequence is Large ribosomal subunit protein bL25 (229 aa).

Disordered stretches follow at residues 1–21 and 182–229; these read MDIIKLNATRREDSGKSASSR and NAPE…KDKK. Over residues 195 to 222 the composition is skewed to low complexity; the sequence is PAAGAPAAGAAAAPAAGAAAPAKGAAPA.

Belongs to the bacterial ribosomal protein bL25 family. CTC subfamily. In terms of assembly, part of the 50S ribosomal subunit; part of the 5S rRNA/L5/L18/L25 subcomplex. Contacts the 5S rRNA. Binds to the 5S rRNA independently of L5 and L18.

Its function is as follows. This is one of the proteins that binds to the 5S RNA in the ribosome where it forms part of the central protuberance. This Sorangium cellulosum (strain So ce56) (Polyangium cellulosum (strain So ce56)) protein is Large ribosomal subunit protein bL25.